A 122-amino-acid polypeptide reads, in one-letter code: Large ribosomal subunit protein uL14 (122 aa).

This sequence belongs to the universal ribosomal protein uL14 family. As to quaternary structure, part of the 50S ribosomal subunit. Forms a cluster with proteins L3 and L19. In the 70S ribosome, L14 and L19 interact and together make contacts with the 16S rRNA in bridges B5 and B8.

Binds to 23S rRNA. Forms part of two intersubunit bridges in the 70S ribosome. This Rickettsia massiliae (strain Mtu5) protein is Large ribosomal subunit protein uL14.